The sequence spans 714 residues: Fatty acid oxidation complex subunit alpha (714 aa).

Positions 1–190 (MEMTSAFTLN…KLGLVDDVVP (190 aa)) are enoyl-CoA hydratase. Positions 306 to 714 (APLNSVGILG…FWKTTATDLQ (409 aa)) are 3-hydroxyacyl-CoA dehydrogenase.

In the N-terminal section; belongs to the enoyl-CoA hydratase/isomerase family. This sequence in the central section; belongs to the 3-hydroxyacyl-CoA dehydrogenase family. As to quaternary structure, heterotetramer of two alpha chains (FadJ) and two beta chains (FadI).

It localises to the cytoplasm. The catalysed reaction is a (3S)-3-hydroxyacyl-CoA = a (2E)-enoyl-CoA + H2O. The enzyme catalyses a 4-saturated-(3S)-3-hydroxyacyl-CoA = a (3E)-enoyl-CoA + H2O. It carries out the reaction a (3S)-3-hydroxyacyl-CoA + NAD(+) = a 3-oxoacyl-CoA + NADH + H(+). It catalyses the reaction (3S)-3-hydroxybutanoyl-CoA = (3R)-3-hydroxybutanoyl-CoA. It participates in lipid metabolism; fatty acid beta-oxidation. Functionally, catalyzes the formation of a hydroxyacyl-CoA by addition of water on enoyl-CoA. Also exhibits 3-hydroxyacyl-CoA epimerase and 3-hydroxyacyl-CoA dehydrogenase activities. Strongly involved in the anaerobic degradation of long and medium-chain fatty acids in the presence of nitrate and weakly involved in the aerobic degradation of long-chain fatty acids. This chain is Fatty acid oxidation complex subunit alpha (fadJ), found in Escherichia coli (strain K12).